The following is a 64-amino-acid chain: Small ribosomal subunit protein bS21 (64 aa).

It belongs to the bacterial ribosomal protein bS21 family.

This chain is Small ribosomal subunit protein bS21, found in Flavobacterium johnsoniae (strain ATCC 17061 / DSM 2064 / JCM 8514 / BCRC 14874 / CCUG 350202 / NBRC 14942 / NCIMB 11054 / UW101) (Cytophaga johnsonae).